A 348-amino-acid chain; its full sequence is LRP2-binding protein (348 aa).

Residues 60–93 (TLAYFLRGQLYFEEGWYEEALEQFEEIEEKDHQA) form a TPR repeat. Sel1-like repeat units follow at residues 94–126 (TYQL…DSPC), 134–169 (FAAA…DNGN), 174–207 (VKAQ…GNGN), 208–243 (LESQ…ERGN), 244–278 (VYAQ…EVHD), and 298–333 (AMAS…RLNP).

In terms of assembly, interacts with LRP2.

Its subcellular location is the cytoplasm. In terms of biological role, may act as an adapter that regulates LRP2 function. The protein is LRP2-binding protein (LRP2BP) of Macaca fascicularis (Crab-eating macaque).